The primary structure comprises 356 residues: Tyrosine recombinase XerS (356 aa).

The Core-binding (CB) domain occupies leucine 16–threonine 121. Residues glycine 169–aspartate 354 form the Tyr recombinase domain. Residues arginine 210, lysine 234, histidine 306, arginine 309, and histidine 332 contribute to the active site. Tyrosine 341 functions as the O-(3'-phospho-DNA)-tyrosine intermediate in the catalytic mechanism.

Belongs to the 'phage' integrase family. XerS subfamily.

The protein localises to the cytoplasm. Its activity is regulated as follows. FtsK is required for recombination. Site-specific tyrosine recombinase, which acts by catalyzing the cutting and rejoining of the recombining DNA molecules. Essential to convert dimers of the bacterial chromosome into monomers to permit their segregation at cell division. The sequence is that of Tyrosine recombinase XerS from Streptococcus pneumoniae (strain P1031).